Reading from the N-terminus, the 364-residue chain is UDP-N-acetylglucosamine--N-acetylmuramyl-(pentapeptide) pyrophosphoryl-undecaprenol N-acetylglucosamine transferase (364 aa).

Residues 13-15, asparagine 125, arginine 165, serine 192, and glutamine 293 contribute to the UDP-N-acetyl-alpha-D-glucosamine site; that span reads TGG.

Belongs to the glycosyltransferase 28 family. MurG subfamily.

Its subcellular location is the cell inner membrane. It catalyses the reaction di-trans,octa-cis-undecaprenyl diphospho-N-acetyl-alpha-D-muramoyl-L-alanyl-D-glutamyl-meso-2,6-diaminopimeloyl-D-alanyl-D-alanine + UDP-N-acetyl-alpha-D-glucosamine = di-trans,octa-cis-undecaprenyl diphospho-[N-acetyl-alpha-D-glucosaminyl-(1-&gt;4)]-N-acetyl-alpha-D-muramoyl-L-alanyl-D-glutamyl-meso-2,6-diaminopimeloyl-D-alanyl-D-alanine + UDP + H(+). The protein operates within cell wall biogenesis; peptidoglycan biosynthesis. Its function is as follows. Cell wall formation. Catalyzes the transfer of a GlcNAc subunit on undecaprenyl-pyrophosphoryl-MurNAc-pentapeptide (lipid intermediate I) to form undecaprenyl-pyrophosphoryl-MurNAc-(pentapeptide)GlcNAc (lipid intermediate II). The sequence is that of UDP-N-acetylglucosamine--N-acetylmuramyl-(pentapeptide) pyrophosphoryl-undecaprenol N-acetylglucosamine transferase from Cereibacter sphaeroides (strain ATCC 17025 / ATH 2.4.3) (Rhodobacter sphaeroides).